We begin with the raw amino-acid sequence, 241 residues long: Methylthioribulose-1-phosphate dehydratase (241 aa).

Cys96 contributes to the substrate binding site. Residues His114 and His116 each contribute to the Zn(2+) site. Residue Glu138 is the Proton donor/acceptor of the active site. Residue His194 participates in Zn(2+) binding.

This sequence belongs to the aldolase class II family. MtnB subfamily. Zn(2+) serves as cofactor.

The protein localises to the cytoplasm. It catalyses the reaction 5-(methylsulfanyl)-D-ribulose 1-phosphate = 5-methylsulfanyl-2,3-dioxopentyl phosphate + H2O. Its pathway is amino-acid biosynthesis; L-methionine biosynthesis via salvage pathway; L-methionine from S-methyl-5-thio-alpha-D-ribose 1-phosphate: step 2/6. Catalyzes the dehydration of methylthioribulose-1-phosphate (MTRu-1-P) into 2,3-diketo-5-methylthiopentyl-1-phosphate (DK-MTP-1-P). Functions in the methionine salvage pathway. May play a role in apoptosis. The protein is Methylthioribulose-1-phosphate dehydratase of Danio rerio (Zebrafish).